The following is a 341-amino-acid chain: 4-hydroxythreonine-4-phosphate dehydrogenase (341 aa).

Threonine 126 contributes to the substrate binding site. Positions 161, 206, and 272 each coordinate a divalent metal cation. Positions 280, 289, and 298 each coordinate substrate.

The protein belongs to the PdxA family. As to quaternary structure, homodimer. The cofactor is a divalent metal cation.

It localises to the cytoplasm. It catalyses the reaction 4-(phosphooxy)-L-threonine + NAD(+) = 3-amino-2-oxopropyl phosphate + CO2 + NADH. Its pathway is cofactor biosynthesis; pyridoxine 5'-phosphate biosynthesis; pyridoxine 5'-phosphate from D-erythrose 4-phosphate: step 4/5. Catalyzes the NAD(P)-dependent oxidation of 4-(phosphooxy)-L-threonine (HTP) into 2-amino-3-oxo-4-(phosphooxy)butyric acid which spontaneously decarboxylates to form 3-amino-2-oxopropyl phosphate (AHAP). This Thermosynechococcus vestitus (strain NIES-2133 / IAM M-273 / BP-1) protein is 4-hydroxythreonine-4-phosphate dehydrogenase.